A 424-amino-acid polypeptide reads, in one-letter code: Methylenetetrahydrofolate--tRNA-(uracil-5-)-methyltransferase TrmFO 1 (424 aa).

Residue 8–13 (GAGLSG) coordinates FAD.

This sequence belongs to the MnmG family. TrmFO subfamily. The cofactor is FAD.

It localises to the cytoplasm. The enzyme catalyses uridine(54) in tRNA + (6R)-5,10-methylene-5,6,7,8-tetrahydrofolate + NADH + H(+) = 5-methyluridine(54) in tRNA + (6S)-5,6,7,8-tetrahydrofolate + NAD(+). The catalysed reaction is uridine(54) in tRNA + (6R)-5,10-methylene-5,6,7,8-tetrahydrofolate + NADPH + H(+) = 5-methyluridine(54) in tRNA + (6S)-5,6,7,8-tetrahydrofolate + NADP(+). Functionally, catalyzes the folate-dependent formation of 5-methyl-uridine at position 54 (M-5-U54) in all tRNAs. This chain is Methylenetetrahydrofolate--tRNA-(uracil-5-)-methyltransferase TrmFO 1, found in Mycoplasma mycoides subsp. mycoides SC (strain CCUG 32753 / NCTC 10114 / PG1).